Reading from the N-terminus, the 192-residue chain is NADH dehydrogenase [ubiquinone] iron-sulfur protein 3 (192 aa).

It belongs to the complex I 30 kDa subunit family. Complex I is composed of about 45 different subunits. This is a component of the iron-sulfur (IP) fragment of the enzyme.

It localises to the mitochondrion inner membrane. The catalysed reaction is a ubiquinone + NADH + 5 H(+)(in) = a ubiquinol + NAD(+) + 4 H(+)(out). Functionally, core subunit of the mitochondrial membrane respiratory chain NADH dehydrogenase (Complex I) that is believed to belong to the minimal assembly required for catalysis. Complex I functions in the transfer of electrons from NADH to the respiratory chain. The immediate electron acceptor for the enzyme is believed to be ubiquinone. The chain is NADH dehydrogenase [ubiquinone] iron-sulfur protein 3 (NAD9) from Patellifolia webbiana (Patellaria webbiana).